We begin with the raw amino-acid sequence, 134 residues long: DNA-directed RNA polymerase subunit omega (134 aa).

The protein belongs to the RNA polymerase subunit omega family. As to quaternary structure, the RNAP catalytic core consists of 2 alpha, 1 beta, 1 beta' and 1 omega subunit. When a sigma factor is associated with the core the holoenzyme is formed, which can initiate transcription.

The enzyme catalyses RNA(n) + a ribonucleoside 5'-triphosphate = RNA(n+1) + diphosphate. Promotes RNA polymerase assembly. Latches the N- and C-terminal regions of the beta' subunit thereby facilitating its interaction with the beta and alpha subunits. The polypeptide is DNA-directed RNA polymerase subunit omega (Brucella anthropi (strain ATCC 49188 / DSM 6882 / CCUG 24695 / JCM 21032 / LMG 3331 / NBRC 15819 / NCTC 12168 / Alc 37) (Ochrobactrum anthropi)).